An 85-amino-acid chain; its full sequence is Small ribosomal subunit protein uS17 (85 aa).

The protein belongs to the universal ribosomal protein uS17 family. In terms of assembly, part of the 30S ribosomal subunit.

In terms of biological role, one of the primary rRNA binding proteins, it binds specifically to the 5'-end of 16S ribosomal RNA. This chain is Small ribosomal subunit protein uS17, found in Anaeromyxobacter dehalogenans (strain 2CP-1 / ATCC BAA-258).